The chain runs to 134 residues: Ribonuclease P protein component (134 aa).

Belongs to the RnpA family. Consists of a catalytic RNA component (M1 or rnpB) and a protein subunit.

The catalysed reaction is Endonucleolytic cleavage of RNA, removing 5'-extranucleotides from tRNA precursor.. In terms of biological role, RNaseP catalyzes the removal of the 5'-leader sequence from pre-tRNA to produce the mature 5'-terminus. It can also cleave other RNA substrates such as 4.5S RNA. The protein component plays an auxiliary but essential role in vivo by binding to the 5'-leader sequence and broadening the substrate specificity of the ribozyme. The sequence is that of Ribonuclease P protein component from Pseudomonas putida (strain ATCC 700007 / DSM 6899 / JCM 31910 / BCRC 17059 / LMG 24140 / F1).